Consider the following 291-residue polypeptide: ATP synthase gamma chain (291 aa).

Belongs to the ATPase gamma chain family. F-type ATPases have 2 components, CF(1) - the catalytic core - and CF(0) - the membrane proton channel. CF(1) has five subunits: alpha(3), beta(3), gamma(1), delta(1), epsilon(1). CF(0) has three main subunits: a, b and c.

It localises to the cell inner membrane. Produces ATP from ADP in the presence of a proton gradient across the membrane. The gamma chain is believed to be important in regulating ATPase activity and the flow of protons through the CF(0) complex. This is ATP synthase gamma chain from Neisseria meningitidis serogroup C (strain 053442).